Here is a 277-residue protein sequence, read N- to C-terminus: MTKTELKPILVFDSGIGGLTVLREARVLMPERHFIYVADDAGFPYGGWEEGALKERVIALFGRLLAELDPEICIIACNTAFTLVGADLRAAYPQMTFVGTVPAIKPAAERTRSGLVSVLATPGTVKRAYTRDLIQSFASQCHVRLVGSENLARMAEAYIRGDALADEAVLAEIEPCFVEAEGKRTDIVVLACTHYPFMSNVFRRLAPWPVDWLDPAEAIARRARSLVPLPNGFEPLNGEDPAIFTSGRPDFATRRLMQGFGLRVMADAVSADRRERI.

Substrate contacts are provided by residues 13–14 (DS) and 45–46 (YG). Cys-77 functions as the Proton donor/acceptor in the catalytic mechanism. 78–79 (NT) contributes to the substrate binding site. The active-site Proton donor/acceptor is the Cys-192. Position 193–194 (193–194 (TH)) interacts with substrate.

This sequence belongs to the aspartate/glutamate racemases family.

The catalysed reaction is L-glutamate = D-glutamate. Its pathway is cell wall biogenesis; peptidoglycan biosynthesis. Functionally, provides the (R)-glutamate required for cell wall biosynthesis. The sequence is that of Glutamate racemase from Rhizobium meliloti (strain 1021) (Ensifer meliloti).